The sequence spans 275 residues: MAIVKCKPTSPGRRHLVKVVNNDLHKGKPFAALLESKSKSGGRNNGGRITVRHIGGGHKQHYRIVDFKRNKDGIPAKVERLEYDPNRSANIALVLYSDGERRYILAPKGLVAGDQIISGEDASIKVGNCLPMRNIPVGTTVHAVEMKPAKGAQIARSAGAYSQIVARDGAYVTLRLRSGEMRKIPTECRATIGEVGNAEHMLRQLGKAGATRWRGVRPTVRGVVMNPVDHPHGGGEGKSSGGRHPVSPWGMPTKGYKTRKNKGTDQYIVRRRNKK.

Positions 223–275 are disordered; that stretch reads VVMNPVDHPHGGGEGKSSGGRHPVSPWGMPTKGYKTRKNKGTDQYIVRRRNKK.

This sequence belongs to the universal ribosomal protein uL2 family. In terms of assembly, part of the 50S ribosomal subunit. Forms a bridge to the 30S subunit in the 70S ribosome.

Its function is as follows. One of the primary rRNA binding proteins. Required for association of the 30S and 50S subunits to form the 70S ribosome, for tRNA binding and peptide bond formation. It has been suggested to have peptidyltransferase activity; this is somewhat controversial. Makes several contacts with the 16S rRNA in the 70S ribosome. The sequence is that of Large ribosomal subunit protein uL2 from Psychromonas ingrahamii (strain DSM 17664 / CCUG 51855 / 37).